A 204-amino-acid chain; its full sequence is N-(5'-phosphoribosyl)anthranilate isomerase (204 aa).

It belongs to the TrpF family.

The catalysed reaction is N-(5-phospho-beta-D-ribosyl)anthranilate = 1-(2-carboxyphenylamino)-1-deoxy-D-ribulose 5-phosphate. It functions in the pathway amino-acid biosynthesis; L-tryptophan biosynthesis; L-tryptophan from chorismate: step 3/5. This is N-(5'-phosphoribosyl)anthranilate isomerase from Bacillus cereus (strain B4264).